A 169-amino-acid polypeptide reads, in one-letter code: Oleosin Cor a 15 (169 aa).

Helical transmembrane passes span 38 to 58 (IAVVTLLPLGGFLLLLAGLTF) and 70 to 90 (PLFVLCSPVLVPAAIVIGLAV). The Proline-knot motif lies at 70–81 (PLFVLCSPVLVP). 2 stretches are compositionally biased toward basic and acidic residues: residues 122–131 (QMEHAKRRAQ) and 160–169 (EGGRGEEKKT). The segment at 122-169 (QMEHAKRRAQDTAGHLGQKARETGQTVTGKGQEAGKTLEGGRGEEKKT) is disordered.

It belongs to the oleosin family. In terms of tissue distribution, expressed in seeds (at protein level).

The protein resides in the lipid droplet. The protein localises to the membrane. In terms of biological role, may have a structural role to stabilize the lipid body during desiccation of the seed by preventing coalescence of the oil. Probably interacts with both lipid and phospholipid moieties of lipid bodies. May also provide recognition signals for specific lipase anchorage in lipolysis during seedling growth. This Corylus avellana (European hazel) protein is Oleosin Cor a 15.